The sequence spans 362 residues: Tyrosine-protein kinase SRK2 (362 aa).

One can recognise an SH2 domain in the interval 1–70 (TFLVRESESK…GLCVNLRQPC (70 aa)). The 254-residue stretch at 95–348 (ITLIRKLGAG…ALQWRLEDFF (254 aa)) folds into the Protein kinase domain. ATP contacts are provided by residues 101-109 (LGAGQFGEV) and K123. D214 acts as the Proton acceptor in catalysis.

The protein belongs to the protein kinase superfamily. Tyr protein kinase family.

It is found in the cytoplasm. It carries out the reaction L-tyrosyl-[protein] + ATP = O-phospho-L-tyrosyl-[protein] + ADP + H(+). In Spongilla lacustris (Freshwater sponge), this protein is Tyrosine-protein kinase SRK2 (SRK2).